The following is a 158-amino-acid chain: 2-amino-4-hydroxy-6-hydroxymethyldihydropteridine pyrophosphokinase (158 aa).

Belongs to the HPPK family.

The enzyme catalyses 6-hydroxymethyl-7,8-dihydropterin + ATP = (7,8-dihydropterin-6-yl)methyl diphosphate + AMP + H(+). The protein operates within cofactor biosynthesis; tetrahydrofolate biosynthesis; 2-amino-4-hydroxy-6-hydroxymethyl-7,8-dihydropteridine diphosphate from 7,8-dihydroneopterin triphosphate: step 4/4. Catalyzes the transfer of pyrophosphate from adenosine triphosphate (ATP) to 6-hydroxymethyl-7,8-dihydropterin, an enzymatic step in folate biosynthesis pathway. The chain is 2-amino-4-hydroxy-6-hydroxymethyldihydropteridine pyrophosphokinase (folK) from Methylorubrum extorquens (strain ATCC 14718 / DSM 1338 / JCM 2805 / NCIMB 9133 / AM1) (Methylobacterium extorquens).